We begin with the raw amino-acid sequence, 498 residues long: Cytochrome P450 71D15 (498 aa).

The helical; Signal-anchor for type II membrane protein transmembrane segment at 3–23 threads the bilayer; that stretch reads LLQLWSALIILVVTYTISLLI. Heme is bound at residue C437.

It belongs to the cytochrome P450 family. Heme serves as cofactor.

Its subcellular location is the endoplasmic reticulum membrane. The enzyme catalyses (4S)-limonene + reduced [NADPH--hemoprotein reductase] + O2 = (1S,6R)-isopiperitenol + oxidized [NADPH--hemoprotein reductase] + H2O + H(+). Hydroxylates (-)-(4S)-limonene to (-)-trans-isopiperitenol, a precursor of (-)-menthol, responsible for the cooling sensation of peppermint. Fluorinated substrate analogs are hydroxylated with the same regio- and stereochemistry. This is Cytochrome P450 71D15 (CYP71D15) from Mentha piperita (Peppermint).